The primary structure comprises 1124 residues: MDAHEDYVWPRATSELILLPVTGLECVGERLLAGEGPDVLVYTLDFGGHLRMMKRVQNLLGHYLIHGFRVRPEPNGDLDSEVMVAAFGSKGLRIVKISWGQGRFRELWRSGLWNMSDWIWDARWLEGNIALALGHNSVVLYDPVVGCSLQDVPCTDRCTLSSACLIGDTWKELTVVAGAVSNQLLVWYPAAALTDDKPVVPDRRVSGHVGVIFSMSYLESKGLLATASEDRSVRIWKVGDLRVPGGRVQNIGHCFGHSARVWQVKLLENYLISAGEDCVCLVWSHEGEILQAFRGHQGRGIRALAAHERQAWVITGGDDSGIRLWHLVGRGHPGSGVFALSFKSHSRPGVLKAVTLAGSWRVLAVTDAGALYLYDLEVKCWEQLLEDKRFQSYCLLEAAPGPEGFGLCALANGEGRVKVVPINTPTAAVDLTLFPGKVHSLSWALRGYEELLLLASGPGGVVACLEISAAPSGKAIFVKERCRYLLPPSKQRWHTCSAFLPPGDFLVCGDRRGSVLLYPSRPDLLKDLGVVSKVGAITSAPGAGSGEGEPSLAEWGPMSTLPSLHGKQGVTSVTCHGGYVYTTGRDGSYYQLFVRGGQLQPVLRQKPCRGMNWVAGVRMVADGNMVILGFHANEFVVWSPRSHEKLHIINCGGGHRSWAFSDTEAAMAFAYLKDGDVMLYRALGGCTRPHVILRESLHGREITCVKRVGSITLGPESGVPSFLQPDHLEPGEPVEPGSEGPGLIDIVITCSEDTTVCVLALPTATGSAHALTAVCNHISSVRAVAVWGVGTPGGPQDPQPGLTAHVVSAGGRAEMHCFTIMVTPDPSPPSRLACHVMHLSSHRLDEYWDRQRHRHRMIKVDPETRYMSLAVCELDRPGLGPLVAAACSDGAVRLFLLQDSGRRLQLLAETSHHKRCVLKVHAFTHEAPNRRRRLFLCSAATDGSLAFWDLTTMLDQDSPALEAAADLGLPFQLGSPCLTVQAHSCGVNSLHTLPTREGHLVASGSEDGSLHVFVLAVEMPELEEAVGGAELLPQLQVLEEYSVPCAHAAHVTGLKILSRSLMVSASIDQRLTFWRLGHGEPTFMNSTVYHVADVADMDCWPVSPEFGHRCALGGQGLEVYNWYD.

At Met-1 the chain carries N-acetylmethionine. WD repeat units follow at residues 53–97 (MKRV…IVKI), 105–143 (RELWRSGLWNMSDWIWDARWLEGNIALALGHNSVVLYDP), 147–189 (CSLQ…VWYP), 200–238 (VPDRRVSGHVGVIFSMSYLESKGLLATASEDRSVRIWKV), 247–285 (RVQNIGHCFGHSARVWQVKLLENYLISAGEDCVCLVWSH), 289–327 (ILQAFRGHQGRGIRALAAHERQAWVITGGDDSGIRLWHL), 335–376 (SGVF…LYDL), 381–422 (WEQL…VVPI), 425–470 (PTAA…ISAA), 476–520 (IFVK…LYPS), 557–596 (PMSTLPSLHGKQGVTSVTCHGGYVYTTGRDGSYYQLFVRG), 602–640 (VLRQKPCRGMNWVAGVRMVADGNMVILGFHANEFVVWSP), 643–682 (HEKLHIINCGGGHRSWAFSDTEAAMAFAYLKDGDVMLYRA), 743–789 (LIDI…VWGV), 852–897 (RHRH…LFLL), 905–950 (QLLA…FWDL), 974–1015 (GSPC…VFVL), 1039–1076 (EEYSVPCAHAAHVTGLKILSRSLMVSASIDQRLTFWRL), and 1082–1124 (TFMN…NWYD).

The protein belongs to the WD repeat WDR6 family. In terms of assembly, interacts with FTSJ1; the interaction is direct, and required for 2'-O-methylation of position 34 in substrate tRNAs. Interacts with IRS4. Interacts with STK11/LKB1.

Its subcellular location is the cytoplasm. Functionally, together with methyltransferase FTSJ1, methylates the 2'-O-ribose of nucleotides at position 34 of the tRNA anticodon loop of substrate tRNAs. Required for the correct positioning of the substrate tRNA for methylation. Required to suppress amino acid starvation-induced autophagy. Enhances the STK11/LKB1-induced cell growth suppression activity. The polypeptide is tRNA (34-2'-O)-methyltransferase regulator WDR6 (WDR6) (Bos taurus (Bovine)).